Here is a 484-residue protein sequence, read N- to C-terminus: Protein nucleotidyltransferase YdiU (484 aa).

ATP is bound by residues G81, G83, R84, K103, D115, G116, R166, and R173. The active-site Proton acceptor is the D244. Residues N245 and D254 each coordinate Mg(2+). D254 contributes to the ATP binding site.

Belongs to the SELO family. Mg(2+) serves as cofactor. The cofactor is Mn(2+).

The catalysed reaction is L-seryl-[protein] + ATP = 3-O-(5'-adenylyl)-L-seryl-[protein] + diphosphate. It carries out the reaction L-threonyl-[protein] + ATP = 3-O-(5'-adenylyl)-L-threonyl-[protein] + diphosphate. It catalyses the reaction L-tyrosyl-[protein] + ATP = O-(5'-adenylyl)-L-tyrosyl-[protein] + diphosphate. The enzyme catalyses L-histidyl-[protein] + UTP = N(tele)-(5'-uridylyl)-L-histidyl-[protein] + diphosphate. The catalysed reaction is L-seryl-[protein] + UTP = O-(5'-uridylyl)-L-seryl-[protein] + diphosphate. It carries out the reaction L-tyrosyl-[protein] + UTP = O-(5'-uridylyl)-L-tyrosyl-[protein] + diphosphate. Its function is as follows. Nucleotidyltransferase involved in the post-translational modification of proteins. It can catalyze the addition of adenosine monophosphate (AMP) or uridine monophosphate (UMP) to a protein, resulting in modifications known as AMPylation and UMPylation. The chain is Protein nucleotidyltransferase YdiU from Shewanella oneidensis (strain ATCC 700550 / JCM 31522 / CIP 106686 / LMG 19005 / NCIMB 14063 / MR-1).